A 268-amino-acid polypeptide reads, in one-letter code: D-alanyl-D-alanine carboxypeptidase (268 aa).

The chain crosses the membrane as a helical span at residues 25–47; it reads AFLWAFIISFTVCTLFLGWRLVS. Substrate is bound by residues Q151, 179 to 181, and S186; that span reads WVA. 2 residues coordinate Zn(2+): H188 and D195. The Proton donor/acceptor role is filled by E238. H241 contributes to the Zn(2+) binding site.

This sequence belongs to the peptidase M15B family. As to quaternary structure, monomer. Requires Zn(2+) as cofactor.

Its subcellular location is the cell membrane. Carboxypeptidase activity is insensitive to beta-lactams since it is not affected by penicillin G or ampicillin and is inhibited only by very high concentrations of cefalotin and cefoxitin. Carboxypeptidase that cleaves the C-terminal D-alanine residue from the peptidoglycan-derived pentapeptide L-Ala-gamma-D-Glu-L-Lys-D-Ala-D-Ala in vitro. Therefore, should contribute in vivo to the hydrolysis of the D-alanyl-D-alanine-containing peptidoglycan precursors. May increase the level of glycopeptide antibiotics resistance by decreasing the availability of D-Ala-D-Ala termini from the cell surface, which constitute the antibiotic target residues. This chain is D-alanyl-D-alanine carboxypeptidase, found in Enterococcus faecalis (strain ATCC 700802 / V583).